Consider the following 254-residue polypeptide: uncharacterized protein (254 aa).

A disordered region spans residues 60 to 161 (PKSPTTTSIS…PEIPQAAPGT (102 aa)). Low complexity-rich tracts occupy residues 63 to 77 (PTTT…STTP) and 89 to 146 (TPIP…TTTS).

This is an uncharacterized protein from Caenorhabditis elegans.